Here is a 291-residue protein sequence, read N- to C-terminus: 33 kDa chaperonin (291 aa).

2 cysteine pairs are disulfide-bonded: C235-C237 and C268-C271.

This sequence belongs to the HSP33 family. Under oxidizing conditions two disulfide bonds are formed involving the reactive cysteines. Under reducing conditions zinc is bound to the reactive cysteines and the protein is inactive.

Its subcellular location is the cytoplasm. Redox regulated molecular chaperone. Protects both thermally unfolding and oxidatively damaged proteins from irreversible aggregation. Plays an important role in the bacterial defense system toward oxidative stress. This is 33 kDa chaperonin from Bacillus subtilis (strain 168).